A 467-amino-acid polypeptide reads, in one-letter code: Signal transduction histidine-protein kinase BaeS (467 aa).

Residues 1 to 11 are Cytoplasmic-facing; that stretch reads MKFWRPGITGK. Residues 12-32 traverse the membrane as a helical segment; the sequence is LFLAIFATCIVLLISMHWAVR. At 33–167 the chain is on the periplasmic side; the sequence is ISFERGFIDY…NFDKQQRQTS (135 aa). Residues 168 to 186 traverse the membrane as a helical segment; sequence WLIVALATLLAALATFLLA. The HAMP domain maps to 187–239; sequence RGLLAPVKRLVDGTHKLAAGDFTTRVTPTSEDELGKLAQDFNQLASTLEKNQQ. Residues 187–467 lie on the Cytoplasmic side of the membrane; sequence RGLLAPVKRL…PLERDLQREV (281 aa). One can recognise a Histidine kinase domain in the interval 247 to 461; sequence DISHELRTPL…SITVELPLER (215 aa). Residue His-250 is modified to Phosphohistidine; by autocatalysis.

Post-translationally, autophosphorylated.

The protein resides in the cell inner membrane. The catalysed reaction is ATP + protein L-histidine = ADP + protein N-phospho-L-histidine.. Functionally, member of the two-component regulatory system BaeS/BaeR which responds to envelope stress. Activates expression of periplasmic chaperone spy in response to spheroplast formation, indole and P pili protein PapG overexpression. Activates BaeR by phosphorylation which then activates the mdtABCD and probably the CRISPR-Cas casABCDE-ygbT-ygbF operons. The polypeptide is Signal transduction histidine-protein kinase BaeS (Escherichia coli (strain K12)).